The primary structure comprises 337 residues: Membrane-spanning 4-domains subfamily A member 18 (337 aa).

The interval L101–P121 is disordered. 4 helical membrane-spanning segments follow: residues L155–L175, A183–V203, M220–I240, and G252–G272.

It belongs to the MS4A family.

The protein localises to the membrane. In Bos taurus (Bovine), this protein is Membrane-spanning 4-domains subfamily A member 18 (MS4A18).